The sequence spans 238 residues: Purine nucleoside phosphorylase DeoD-type (238 aa).

H4 contributes to the a purine D-ribonucleoside binding site. Phosphate contacts are provided by residues G20, R24, R43, and 87–90 (RVGS). A purine D-ribonucleoside contacts are provided by residues 179–181 (EME) and 203–204 (SD). The Proton donor role is filled by D204.

It belongs to the PNP/UDP phosphorylase family. Homohexamer; trimer of homodimers.

The enzyme catalyses a purine D-ribonucleoside + phosphate = a purine nucleobase + alpha-D-ribose 1-phosphate. The catalysed reaction is a purine 2'-deoxy-D-ribonucleoside + phosphate = a purine nucleobase + 2-deoxy-alpha-D-ribose 1-phosphate. In terms of biological role, catalyzes the reversible phosphorolytic breakdown of the N-glycosidic bond in the beta-(deoxy)ribonucleoside molecules, with the formation of the corresponding free purine bases and pentose-1-phosphate. This is Purine nucleoside phosphorylase DeoD-type from Haemophilus ducreyi (strain 35000HP / ATCC 700724).